The following is a 471-amino-acid chain: UDP-N-acetylmuramate--L-alanine ligase (471 aa).

Residue 122–128 (GTHGKTT) participates in ATP binding.

It belongs to the MurCDEF family.

Its subcellular location is the cytoplasm. The enzyme catalyses UDP-N-acetyl-alpha-D-muramate + L-alanine + ATP = UDP-N-acetyl-alpha-D-muramoyl-L-alanine + ADP + phosphate + H(+). It participates in cell wall biogenesis; peptidoglycan biosynthesis. In terms of biological role, cell wall formation. This Cutibacterium acnes (strain DSM 16379 / KPA171202) (Propionibacterium acnes) protein is UDP-N-acetylmuramate--L-alanine ligase.